Here is a 246-residue protein sequence, read N- to C-terminus: Protein PHLOEM PROTEIN 2-LIKE A1 (246 aa).

Vascular tissues, specifically in phloem companion cell-sieve element complexes.

The chain is Protein PHLOEM PROTEIN 2-LIKE A1 (PP2A1) from Arabidopsis thaliana (Mouse-ear cress).